The primary structure comprises 332 residues: Fructose-1,6-bisphosphatase class 1 (332 aa).

Residues Glu89, Asp110, Leu112, and Asp113 each coordinate Mg(2+). Residues 113 to 116 (DGSS), Asn206, Tyr239, 257 to 259 (YLY), and Lys269 each bind substrate. A Mg(2+)-binding site is contributed by Glu275.

The protein belongs to the FBPase class 1 family. As to quaternary structure, homotetramer. Mg(2+) is required as a cofactor.

It is found in the cytoplasm. The enzyme catalyses beta-D-fructose 1,6-bisphosphate + H2O = beta-D-fructose 6-phosphate + phosphate. It participates in carbohydrate biosynthesis; gluconeogenesis. The chain is Fructose-1,6-bisphosphatase class 1 from Klebsiella pneumoniae (strain 342).